A 155-amino-acid chain; its full sequence is Cardioactive peptide (155 aa).

Positions 1 to 23 (MRTSMRISLRLLALLACAICSQA) are cleaved as a signal peptide. Positions 24–49 (SLERENNEGTNMANHKLSGVIQWKYE) are excised as a propeptide. Cys54 and Cys60 form a disulfide bridge. Cys60 bears the Cysteine amide mark. Positions 64-155 (RTYPSYPPFS…MQQLEERESK (92 aa)) are excised as a propeptide. The disordered stretch occupies residues 135–155 (NKQKMLQNEKEMQQLEERESK). Residues 141–155 (QNEKEMQQLEERESK) show a composition bias toward basic and acidic residues.

In terms of tissue distribution, central nervous system; most neurons exhibit coexpression with Burs.

It is found in the secreted. Its function is as follows. Cardioregulatory neurohormone that increases heart beat rate during adult wing inflation; has no effect on beat amplitude. The effect of CCAP is both ino- and chronotropic. This Drosophila melanogaster (Fruit fly) protein is Cardioactive peptide.